Reading from the N-terminus, the 638-residue chain is ATP-dependent zinc metalloprotease FtsH (638 aa).

At 1 to 4 the chain is on the cytoplasmic side; that stretch reads MNNQ. Residues 5–25 traverse the membrane as a helical segment; it reads GKNIIVWAVIFVFVILLFNVF. Topologically, residues 26–103 are periplasmic; the sequence is QSDGLLSSKN…VVPPETRMNT (78 aa). The helical transmembrane segment at 104 to 124 threads the bilayer; it reads FLSFLISWFPMLLLIGVWVFF. Residues 125–638 lie on the Cytoplasmic side of the membrane; that stretch reads MRQMHGGGKA…PIKAKKEDKS (514 aa). 195 to 202 is an ATP binding site; sequence GPPGTGKT. Residue H417 participates in Zn(2+) binding. E418 is an active-site residue. Zn(2+)-binding residues include H421 and D495. Residues 523–544 form a disordered region; sequence SASEDMYTNRNSSSDRSESTSE.

It in the central section; belongs to the AAA ATPase family. The protein in the C-terminal section; belongs to the peptidase M41 family. In terms of assembly, homohexamer. It depends on Zn(2+) as a cofactor.

It localises to the cell inner membrane. Functionally, acts as a processive, ATP-dependent zinc metallopeptidase for both cytoplasmic and membrane proteins. Plays a role in the quality control of integral membrane proteins. The polypeptide is ATP-dependent zinc metalloprotease FtsH (Rickettsia bellii (strain RML369-C)).